A 116-amino-acid polypeptide reads, in one-letter code: Large ribosomal subunit protein bL19 (116 aa).

This sequence belongs to the bacterial ribosomal protein bL19 family.

Its function is as follows. This protein is located at the 30S-50S ribosomal subunit interface and may play a role in the structure and function of the aminoacyl-tRNA binding site. In Roseiflexus castenholzii (strain DSM 13941 / HLO8), this protein is Large ribosomal subunit protein bL19.